The chain runs to 99 residues: UPF0235 protein Neut_2146 (99 aa).

This sequence belongs to the UPF0235 family.

This is UPF0235 protein Neut_2146 from Nitrosomonas eutropha (strain DSM 101675 / C91 / Nm57).